A 356-amino-acid polypeptide reads, in one-letter code: Zinc finger CW-type PWWP domain protein 2 (356 aa).

The CW-type zinc-finger motif lies at 24-79 (MYVNKVWVQCENENCLKWRLLSSEDSAKVDHDEPWYCFMNTDSRYNNCSISEEDFP). Zn(2+) is bound by residues Cys33, Cys38, Cys60, and Cys71. Residues 98–162 (LGSLVLVKLQ…ATFVGHYSIT (65 aa)) form the PWWP domain. Residues 279–307 (QALQPTATPDESEEGHGEEINMGEKLSKC) are disordered.

Functionally, histone methylation reader which binds to non-methylated (H3K4me0), monomethylated (H3K4me1), dimethylated (H3K4me2) and trimethylated (H3K4me3) 'Lys-4' on histone H3. The order of binding preference is H3K4me3 &gt; H3K4me2 &gt; H3K4me1 &gt; H3K4me0. The polypeptide is Zinc finger CW-type PWWP domain protein 2 (ZCWPW2) (Homo sapiens (Human)).